Consider the following 3391-residue polypeptide: Genome polyprotein (3391 aa).

The interval 1 to 15 (MNNQRKKAKNTPFNM) is interaction with host EXOC1. Residues 1–101 (MNNQRKKAKN…LNILNRRRRS (101 aa)) are Cytoplasmic-facing. The interval 37 to 72 (MLQGRGPLKLFMALVAFLRFLTIPPTAGILKRWGTI) is hydrophobic; homodimerization of capsid protein C. Positions 101–114 (SAGMIIMLIPTVMA) are cleaved as a propeptide — ER anchor for the capsid protein C, removed in mature form by serine protease NS3. A helical membrane pass occupies residues 102 to 122 (AGMIIMLIPTVMAFHLTTRNG). Topologically, residues 123–238 (EPHMIVSRQE…GAWKHAQRIE (116 aa)) are extracellular. An N-linked (GlcNAc...) asparagine; by host glycan is attached at asparagine 183. The chain crosses the membrane as a helical span at residues 239–259 (TWILRHPGFTIMAAILAYTIG). The Cytoplasmic portion of the chain corresponds to 260–265 (TTHFQR). Residues 266 to 280 (ALIFILLTAVAPSMT) form a helical membrane-spanning segment. Residues 281-725 (MRCIGISNRD…LHQVFGAIYG (445 aa)) are Extracellular-facing. 4 disulfide bridges follow: cysteine 283–cysteine 310, cysteine 340–cysteine 401, cysteine 354–cysteine 385, and cysteine 372–cysteine 396. Asparagine 347 carries an N-linked (GlcNAc...) asparagine; by host glycan. Residues 378 to 391 (DRGWGNGCGLFGKG) form a fusion peptide region. Asparagine 433 carries N-linked (GlcNAc...) asparagine; by host glycosylation. 2 disulfide bridges follow: cysteine 465-cysteine 565 and cysteine 582-cysteine 613. Residues 726–746 (AAFSGVSWTMKILIGVIITWI) traverse the membrane as a helical segment. Topologically, residues 747 to 752 (GMNSRS) are cytoplasmic. Residues 753 to 773 (TSLSVSLVLVGIVTLYLGVMV) traverse the membrane as a helical segment. Residues 774-1195 (QADSGCVVSW…MVGATMTDDI (422 aa)) are Extracellular-facing. 6 cysteine pairs are disulfide-bonded: cysteine 779–cysteine 790, cysteine 830–cysteine 918, cysteine 954–cysteine 998, cysteine 1055–cysteine 1104, cysteine 1066–cysteine 1088, and cysteine 1087–cysteine 1091. N-linked (GlcNAc...) asparagine; by host glycosylation is found at asparagine 905 and asparagine 982. N-linked (GlcNAc...) asparagine; by host glycosylation is present at asparagine 1134. Residues 1196-1220 (GMGVTYLALLAAFKVRPTFAAGLLL) traverse the membrane as a helical segment. Residues 1221-1226 (RKLTSK) lie on the Cytoplasmic side of the membrane. A helical membrane pass occupies residues 1227-1245 (ELMMTTIGIVLLSQSTIPE). Topologically, residues 1246–1269 (TILELTDALALGMMVLKMVRNMEK) are lumenal. Residues 1270–1290 (YQLAVTIMAILCVPNAVILQN) form a helical membrane-spanning segment. Residue alanine 1291 is a topological domain, cytoplasmic. The chain crosses the membrane as a helical span at residues 1292-1310 (WKVSCTILAVVSVSPLLLT). The Lumenal segment spans residues 1311 to 1317 (SSQQKTD). Residues 1318 to 1338 (WIPLALTIKGLNPTAIFLTTL) form a helical membrane-spanning segment. At 1339 to 1346 (SRTSKKRS) the chain is on the cytoplasmic side. The helical transmembrane segment at 1347 to 1367 (WPLNEAIMAVGMVSILASSLL) threads the bilayer. Residues 1368 to 1370 (KND) are Lumenal-facing. The helical transmembrane segment at 1371 to 1391 (IPMTGPLVAGGLLTVCYVLTG) threads the bilayer. Topologically, residues 1392-1447 (RSADLELERAADVKWEDQAEISGSSPILSITISEDGSMSIKNEEEEQTLTILIRTG) are cytoplasmic. An interacts with and activates NS3 protease region spans residues 1398–1437 (LERAADVKWEDQAEISGSSPILSITISEDGSMSIKNEEEE). The helical intramembrane region spans 1448 to 1468 (LLVISGLFPVSIPITAAAWYL). The Cytoplasmic portion of the chain corresponds to 1469–2147 (WEVKKQRAGV…LSELPETLET (679 aa)). In terms of domain architecture, Peptidase S7 spans 1476–1653 (AGVLWDVPSP…EKSIEDNPEI (178 aa)). Active-site charge relay system; for serine protease NS3 activity residues include histidine 1526, aspartate 1550, and serine 1610. The Helicase ATP-binding domain occupies 1655 to 1811 (DDIFRKRRLT…QSNAPIIDEE (157 aa)). Residues 1659–1662 (RKRR) form an important for RNA-binding region. 1668–1675 (LHPGAGKT) is a binding site for ATP. Positions 1759-1762 (DEAH) match the DEAH box motif. Positions 1821–1988 (SGHEWVTDFK…IIPSMFEPER (168 aa)) constitute a Helicase C-terminal domain. Lysine 1863 carries the post-translational modification N6-acetyllysine; by host. A helical membrane pass occupies residues 2148–2168 (LLLLTLLATVTGGIFLFLMSG). Over 2169 to 2170 (RG) the chain is Lumenal. An intramembrane region (helical) is located at residues 2171–2191 (IGKMTLGMCCIITASVLLWYA). Position 2192 (glutamine 2192) is a topological domain, lumenal. The helical transmembrane segment at 2193-2213 (IQPHWIAASIILEFFLIVLLI) threads the bilayer. Residues 2214-2228 (PEPEKQRTPQDNQLT) are Cytoplasmic-facing. The helical transmembrane segment at 2229 to 2249 (YVVIAILTVVAATMANEMGFL) threads the bilayer. Residues 2250–2274 (EKTKKDLGLGSIATQQPESNILDID) lie on the Lumenal side of the membrane. Positions 2275 to 2295 (LRPASAWTLYAVATTFVTPML) form an intramembrane region, helical. Residues 2296–2316 (RHSIENSSVNVSLTAIANQAT) lie on the Lumenal side of the membrane. N-linked (GlcNAc...) asparagine; by host glycans are attached at residues asparagine 2301 and asparagine 2305. Positions 2317 to 2337 (VLMGLGKGWPLSKMDIGVPLL) form an intramembrane region, helical. Topologically, residues 2338 to 2347 (AIGCYSQVNP) are lumenal. The helical transmembrane segment at 2348-2368 (ITLTAALLLLVAHYAIIGPGL) threads the bilayer. Over 2369–2413 (QAKATREAQKRAAAGIMKNPTVDGITVIDLDPIPYDPKFEKQLGQ) the chain is Cytoplasmic. A helical membrane pass occupies residues 2414-2434 (VMLLVLCVTQVLMMRTTWALC). At 2435–2459 (EALTLATGPISTLWEGNPGRFWNTT) the chain is on the lumenal side. N-linked (GlcNAc...) asparagine; by host glycosylation occurs at asparagine 2457. The chain crosses the membrane as a helical span at residues 2460-2480 (IAVSMANIFRGSYLAGAGLLF). Over 2481–3391 (SIMKNTTNTR…REEEEAGVLW (911 aa)) the chain is Cytoplasmic. The mRNA cap 0-1 NS5-type MT domain maps to 2493 to 2755 (TGNIGETLGE…DVDLGSGTRN (263 aa)). Position 2547 (serine 2547) interacts with S-adenosyl-L-methionine. Serine 2547 carries the phosphoserine modification. The active-site For 2'-O-MTase activity is lysine 2552. The SUMO-interacting motif signature appears at 2568–2571 (VVDL). S-adenosyl-L-methionine contacts are provided by glycine 2577, tryptophan 2578, threonine 2595, lysine 2596, aspartate 2622, and valine 2623. Aspartate 2637 functions as the For 2'-O-MTase activity in the catalytic mechanism. An S-adenosyl-L-methionine-binding site is contributed by isoleucine 2638. Catalysis depends on for 2'-O-MTase activity residues lysine 2672 and glutamate 2708. Tyrosine 2710 is a binding site for S-adenosyl-L-methionine. Residues glutamate 2929, histidine 2933, cysteine 2938, and cysteine 2941 each contribute to the Zn(2+) site. In terms of domain architecture, RdRp catalytic spans 3020–3169 (AMYADDTAGW…PLDDRFASAL (150 aa)). The Zn(2+) site is built by histidine 3203, cysteine 3219, and cysteine 3338.

In the N-terminal section; belongs to the class I-like SAM-binding methyltransferase superfamily. mRNA cap 0-1 NS5-type methyltransferase family. As to quaternary structure, homodimer. Interacts (via N-terminus) with host EXOC1 (via C-terminus); this interaction results in EXOC1 degradation through the proteasome degradation pathway. In terms of assembly, forms heterodimers with envelope protein E in the endoplasmic reticulum and Golgi. Homodimer; in the endoplasmic reticulum and Golgi. Interacts with protein prM. Interacts with non-structural protein 1. As to quaternary structure, homodimer; Homohexamer when secreted. Interacts with envelope protein E. Interacts with host PRKAA1. In terms of assembly, interacts (via N-terminus) with serine protease NS3. Forms a heterodimer with serine protease NS3. May form homooligomers. As to quaternary structure, forms a heterodimer with NS2B. Interacts with NS4B. Interacts with unphosphorylated RNA-directed RNA polymerase NS5; this interaction stimulates RNA-directed RNA polymerase NS5 guanylyltransferase activity. Interacts with host SHFL. In terms of assembly, interacts with host MAVS; this interaction inhibits the synthesis of IFN-beta. Interacts with host SHFL. Interacts with host AUP1; the interaction occurs in the presence of Dengue virus NS4B and induces lipophagy which facilitates production of virus progeny particles. May interact with host SRPRA and SEC61G. Interacts with serine protease NS3. As to quaternary structure, homodimer. Interacts with host STAT2; this interaction inhibits the phosphorylation of the latter, and, when all viral proteins are present (polyprotein), targets STAT2 for degradation. Interacts with serine protease NS3. Interacts with host PAF1 complex; the interaction may prevent the recruitment of the PAF1 complex to interferon-responsive genes, and thus reduces the immune response. Post-translationally, specific enzymatic cleavages in vivo yield mature proteins. Cleavages in the lumen of endoplasmic reticulum are performed by host signal peptidase, whereas cleavages in the cytoplasmic side are performed by serine protease NS3. Signal cleavage at the 2K-4B site requires a prior NS3 protease-mediated cleavage at the 4A-2K site. Cleaved in post-Golgi vesicles by a host furin, releasing the mature small envelope protein M, and peptide pr. This cleavage is incomplete as up to 30% of viral particles still carry uncleaved prM. In terms of processing, N-glycosylated. Post-translationally, N-glycosylated. The excreted form is glycosylated and this is required for efficient secretion of the protein from infected cells. Acetylated by host KAT5. Acetylation modulates NS3 RNA-binding and unwinding activities and plays an important positive role for viral replication. In terms of processing, phosphorylated on serines residues. This phosphorylation may trigger NS5 nuclear localization. Post-translationally, sumoylation of RNA-directed RNA polymerase NS5 increases NS5 protein stability allowing proper viral RNA replication.

It is found in the virion. The protein resides in the host nucleus. Its subcellular location is the host cytoplasm. The protein localises to the host perinuclear region. It localises to the secreted. It is found in the virion membrane. The protein resides in the host endoplasmic reticulum membrane. Its subcellular location is the host mitochondrion. The catalysed reaction is Selective hydrolysis of -Xaa-Xaa-|-Yaa- bonds in which each of the Xaa can be either Arg or Lys and Yaa can be either Ser or Ala.. It catalyses the reaction RNA(n) + a ribonucleoside 5'-triphosphate = RNA(n+1) + diphosphate. The enzyme catalyses a ribonucleoside 5'-triphosphate + H2O = a ribonucleoside 5'-diphosphate + phosphate + H(+). It carries out the reaction ATP + H2O = ADP + phosphate + H(+). The catalysed reaction is a 5'-end (5'-triphosphoguanosine)-ribonucleoside in mRNA + S-adenosyl-L-methionine = a 5'-end (N(7)-methyl 5'-triphosphoguanosine)-ribonucleoside in mRNA + S-adenosyl-L-homocysteine. It catalyses the reaction a 5'-end (N(7)-methyl 5'-triphosphoguanosine)-ribonucleoside in mRNA + S-adenosyl-L-methionine = a 5'-end (N(7)-methyl 5'-triphosphoguanosine)-(2'-O-methyl-ribonucleoside) in mRNA + S-adenosyl-L-homocysteine + H(+). In terms of biological role, plays a role in virus budding by binding to the cell membrane and gathering the viral RNA into a nucleocapsid that forms the core of a mature virus particle. During virus entry, may induce genome penetration into the host cytoplasm after hemifusion induced by the surface proteins. Can migrate to the cell nucleus where it modulates host functions. Overcomes the anti-viral effects of host EXOC1 by sequestering and degrading the latter through the proteasome degradation pathway. Its function is as follows. Inhibits RNA silencing by interfering with host Dicer. Functionally, prevents premature fusion activity of envelope proteins in trans-Golgi by binding to envelope protein E at pH6.0. After virion release in extracellular space, gets dissociated from E dimers. Acts as a chaperone for envelope protein E during intracellular virion assembly by masking and inactivating envelope protein E fusion peptide. prM is the only viral peptide matured by host furin in the trans-Golgi network probably to avoid catastrophic activation of the viral fusion activity in acidic Golgi compartment prior to virion release. prM-E cleavage is inefficient, and many virions are only partially matured. These uncleaved prM would play a role in immune evasion. In terms of biological role, may play a role in virus budding. Exerts cytotoxic effects by activating a mitochondrial apoptotic pathway through M ectodomain. May display a viroporin activity. Its function is as follows. Binds to host cell surface receptor and mediates fusion between viral and cellular membranes. Envelope protein is synthesized in the endoplasmic reticulum in the form of heterodimer with protein prM. They play a role in virion budding in the ER, and the newly formed immature particle is covered with 60 spikes composed of heterodimer between precursor prM and envelope protein E. The virion is transported to the Golgi apparatus where the low pH causes dissociation of PrM-E heterodimers and formation of E homodimers. prM-E cleavage is inefficient, and many virions are only partially matured. These uncleaved prM would play a role in immune evasion. Functionally, involved in immune evasion, pathogenesis and viral replication. Once cleaved off the polyprotein, is targeted to three destinations: the viral replication cycle, the plasma membrane and the extracellular compartment. Essential for viral replication. Required for formation of the replication complex and recruitment of other non-structural proteins to the ER-derived membrane structures. Excreted as a hexameric lipoparticle that plays a role against host immune response. Antagonizing the complement function. Binds to the host macrophages and dendritic cells. Inhibits signal transduction originating from Toll-like receptor 3 (TLR3). Mediates complement activation, which may contribute to the pathogenesis of the vascular leakage that occurs in severe dengue disease. Activates autophagy through the AMPK/ERK/mTOR signaling pathway. Mechanistically, acts as the assembly platform for STK11-AMPK interactions and promotes STK11-AMPK interactions. In turn, promotes phosphorylation of the AMPK kinase structural domain and activates AMPK, thereby positively regulating the AMPK/ERK/mTOR signaling pathway and inducing autophagy. Disrupts the host endothelial glycocalyx layer of host pulmonary microvascular endothelial cells, inducing degradation of sialic acid and shedding of heparan sulfate proteoglycans. NS1 induces expression of sialidases, heparanase, and activates cathepsin L, which activates heparanase via enzymatic cleavage. These effects are probably linked to the endothelial hyperpermeability observed in severe dengue disease. In terms of biological role, component of the viral RNA replication complex that functions in virion assembly and antagonizes the host immune response. Its function is as follows. Required cofactor for the serine protease function of NS3. May have membrane-destabilizing activity and form viroporins. Functionally, displays three enzymatic activities: serine protease, NTPase and RNA helicase. NS3 serine protease, in association with NS2B, performs its autocleavage and cleaves the polyprotein at dibasic sites in the cytoplasm: C-prM, NS2A-NS2B, NS2B-NS3, NS3-NS4A, NS4A-2K and NS4B-NS5. NS3 RNA helicase binds RNA and unwinds dsRNA in the 3' to 5' direction. Regulates the ATPase activity of the NS3 helicase activity. NS4A allows NS3 helicase to conserve energy during unwinding. Plays a role in the inhibition of the host innate immune response. Interacts with host MAVS and thereby prevents the interaction between RIGI and MAVS. In turn, IFN-beta production is impaired. Interacts with host AUP1 which mediates induction of lipophagy in host cells and facilitates production of virus progeny particles. In terms of biological role, functions as a signal peptide for NS4B and is required for the interferon antagonism activity of the latter. Its function is as follows. Induces the formation of ER-derived membrane vesicles where the viral replication takes place. Inhibits interferon (IFN)-induced host STAT1 phosphorylation and nuclear translocation, thereby preventing the establishment of cellular antiviral state by blocking the IFN-alpha/beta pathway. Functionally, replicates the viral (+) and (-) RNA genome, and performs the capping of genomes in the cytoplasm. NS5 methylates viral RNA cap at guanine N-7 and ribose 2'-O positions. Besides its role in RNA genome replication, also prevents the establishment of cellular antiviral state by blocking the interferon-alpha/beta (IFN-alpha/beta) signaling pathway. Inhibits host TYK2 and STAT2 phosphorylation, thereby preventing activation of JAK-STAT signaling pathway. May reduce immune responses by preventing the recruitment of the host PAF1 complex to interferon-responsive genes. The protein is Genome polyprotein of Aedimorphus (Red guenon).